The chain runs to 78 residues: Large ribosomal subunit protein bL28 (78 aa).

Positions 1 to 31 are disordered; sequence MAAHCQVTGAEPGFGHSISHSHRRNKRRFDP.

It belongs to the bacterial ribosomal protein bL28 family.

The protein is Large ribosomal subunit protein bL28 of Pseudarthrobacter chlorophenolicus (strain ATCC 700700 / DSM 12829 / CIP 107037 / JCM 12360 / KCTC 9906 / NCIMB 13794 / A6) (Arthrobacter chlorophenolicus).